We begin with the raw amino-acid sequence, 491 residues long: Glycogen synthase 1 (491 aa).

K15 lines the ADP-alpha-D-glucose pocket.

Belongs to the glycosyltransferase 1 family. Bacterial/plant glycogen synthase subfamily.

The enzyme catalyses [(1-&gt;4)-alpha-D-glucosyl](n) + ADP-alpha-D-glucose = [(1-&gt;4)-alpha-D-glucosyl](n+1) + ADP + H(+). It participates in glycan biosynthesis; glycogen biosynthesis. Functionally, synthesizes alpha-1,4-glucan chains using ADP-glucose. In Synechococcus sp. (strain JA-3-3Ab) (Cyanobacteria bacterium Yellowstone A-Prime), this protein is Glycogen synthase 1.